A 265-amino-acid polypeptide reads, in one-letter code: Insulin-like growth factor-binding protein 2-B (265 aa).

The first 17 residues, 1-17 (MSLALLCSLLLVHGSLG), serve as a signal peptide directing secretion. An IGFBP N-terminal domain is found at 19–99 (IVFRCPSCTA…IQGLGRCENK (81 aa)). 6 disulfides stabilise this stretch: Cys-23–Cys-49, Cys-26–Cys-51, Cys-34–Cys-52, Cys-41–Cys-55, Cys-63–Cys-76, and Cys-70–Cys-96. The segment covering 107-122 (TNQESAAHSGEVNGTR) has biased composition (polar residues). Disordered stretches follow at residues 107 to 128 (TNQESAAHSGEVNGTRSPPMKK) and 144 to 170 (HHNNKRTRMYNTQDDPKTPHPKQSQCQ). Residues 166–248 (QSQCQQELDK…SDKVRGDPNC (83 aa)) form the Thyroglobulin type-1 domain. Cystine bridges form between Cys-169-Cys-203, Cys-214-Cys-225, and Cys-227-Cys-248. Positions 238–265 (SSDKVRGDPNCSQYYGGPELEPPTAQQK) are disordered. A Cell attachment site motif is present at residues 243-245 (RGD).

Interacts with igf2. Interacts with igf1. In early embryos, expressed at a low level in most tissues with expression becoming abundant in the liver by 96 hours post-fertilization (hpf). The expression pattern in adults exhibits sexual dimorphism; in adult males expression is limited exclusively to the liver whereas in adult females expression is observed in the liver and other tissues including the gut, kidney, ovary and muscle.

The protein localises to the secreted. In terms of biological role, IGF-binding proteins prolong the half-life of the IGFs and have been shown to either inhibit or stimulate the growth promoting effects of the IGFs on cell culture. They alter the interaction of IGFs with their cell surface receptors. The polypeptide is Insulin-like growth factor-binding protein 2-B (Danio rerio (Zebrafish)).